Here is a 611-residue protein sequence, read N- to C-terminus: Nuclear cap-binding protein subunit 3 (611 aa).

The segment at 1–44 (MAAVRGLRVSVKAGGGAEPEPMEVEEGEVEAAADRASPREVVSG) is disordered. Positions 20–31 (EPMEVEEGEVEA) are enriched in acidic residues. The tract at residues 108 to 169 (ETLYVYGVDD…LSSMPTNEKG (62 aa)) is RNA recognition motif (RRM) domain. The WLDD motif; essential for 7-methylguanosine-containing mRNA cap binding motif lies at 137 to 140 (WLDD). Disordered regions lie at residues 159–230 (NLSS…PDTL), 338–360 (EEPIEEEEEEEEEEEDMDEDDRV), 373–393 (REREGARRSAASNSDSDEMDY), 423–568 (KTIR…DSVL), and 583–611 (RQKKSRLDNLPSLQIEISRESSSGSDTDS). Positions 168–179 (KGQRKKDGEHSS) are enriched in basic and acidic residues. 2 stretches are compositionally biased toward acidic residues: residues 196–218 (DETEEGEVEEDNPSEAEDEDETE) and 339–358 (EPIEEEEEEEEEEEDMDEDD). Polar residues predominate over residues 423 to 439 (KTIRNSMRSDSVGNSVK). The span at 446–463 (SHAEKPADVRLILEEKRQ) shows a compositional bias: basic and acidic residues. The segment covering 464-475 (STASRQQSSSGK) has biased composition (low complexity). 2 stretches are compositionally biased toward basic and acidic residues: residues 501-511 (SRREPLSDVHS) and 544-556 (PKDKERPSEKSEK). Over residues 602–611 (ESSSGSDTDS) the composition is skewed to low complexity.

This sequence belongs to the NCBP3 family. Component of an alternative cap-binding complex (CBC) composed of NCBP1/CBP80 and NCBP3.

Its subcellular location is the nucleus. The protein resides in the cytoplasm. Functionally, associates with NCBP1/CBP80 to form an alternative cap-binding complex (CBC) which plays a key role in mRNA export. NCBP3 serves as adapter protein linking the capped RNAs (m7GpppG-capped RNA) to NCBP1/CBP80. Unlike the conventional CBC with NCBP2 which binds both small nuclear RNA (snRNA) and messenger (mRNA) and is involved in their export from the nucleus, the alternative CBC with NCBP3 does not bind snRNA and associates only with mRNA thereby playing a role in only mRNA export. This chain is Nuclear cap-binding protein subunit 3, found in Xenopus tropicalis (Western clawed frog).